A 69-amino-acid chain; its full sequence is FMRFamide-like neuropeptides 24 (69 aa).

A signal peptide spans 1–25; it reads MLSSRTSSIILILAILVAIMAVAQC. Positions 26–51 are excised as a propeptide; it reads RNIQYDVEEMTPEAAFRYAQWGEIPH. F64 is subject to Phenylalanine amide. A propeptide spanning residues 68–69 is cleaved from the precursor; that stretch reads SI.

It belongs to the FARP (FMRFamide related peptide) family.

It is found in the secreted. In terms of biological role, probable FMRFamide-like neuropeptides. Plays a role in behaviors associated with a sleep-like state induced by stress (SIS), acting in concert with the FMRFamide related peptide flp-13 and neuropeptide-like protein nlp-8. The polypeptide is FMRFamide-like neuropeptides 24 (Caenorhabditis elegans).